We begin with the raw amino-acid sequence, 281 residues long: Eukaryotic translation initiation factor 3 subunit G (281 aa).

The segment at 1 to 32 is disordered; that stretch reads MSRPAGRTDWAEEDDETELALPSQTVVKNKDG. The 79-residue stretch at 202–280 folds into the RRM domain; the sequence is ATLRVTNVSE…LILRVEFAKK (79 aa).

This sequence belongs to the eIF-3 subunit G family. As to quaternary structure, component of the eukaryotic translation initiation factor 3 (eIF-3) complex.

It is found in the cytoplasm. Its function is as follows. RNA-binding component of the eukaryotic translation initiation factor 3 (eIF-3) complex, which is involved in protein synthesis of a specialized repertoire of mRNAs and, together with other initiation factors, stimulates binding of mRNA and methionyl-tRNAi to the 40S ribosome. The eIF-3 complex specifically targets and initiates translation of a subset of mRNAs involved in cell proliferation. This subunit can bind 18S rRNA. The sequence is that of Eukaryotic translation initiation factor 3 subunit G from Phaeosphaeria nodorum (strain SN15 / ATCC MYA-4574 / FGSC 10173) (Glume blotch fungus).